The primary structure comprises 269 residues: Putative hydro-lyase Aave_3512 (269 aa).

Belongs to the D-glutamate cyclase family.

The chain is Putative hydro-lyase Aave_3512 from Paracidovorax citrulli (strain AAC00-1) (Acidovorax citrulli).